A 219-amino-acid chain; its full sequence is Flagellin B4 (219 aa).

Residues Met1 to Gly5 constitute a propeptide that is removed on maturation.

It belongs to the archaeal flagellin family.

The protein localises to the archaeal flagellum. Flagellin is the subunit protein which polymerizes to form the filaments of archaeal flagella. This is Flagellin B4 (flaB4) from Pyrococcus abyssi (strain GE5 / Orsay).